The sequence spans 421 residues: Putative transporter AmpG 3 (421 aa).

12 helical membrane passes run 6 to 26 (YLIGILLLGLISGLTFNLIFF), 41 to 61 (IIGAISLAAFPYCLKVIWSPF), 80 to 100 (WALVSQIFLILAMMWFLKRSP), 104 to 124 (LCITAIILFIIAFFSSTQDIV), 139 to 159 (LSIVFTFSSIGFRLGMLLGSV), 166 to 186 (IIFGWNTVYKFALFITMVGPI), 230 to 250 (LLLIILFVFLYKAADSIPMAM), 274 to 294 (LLIMIVGGTLGGILAAKIGIF), 297 to 317 (VLIGGVIQLLSPLMFMILATI), 324 to 344 (FIITITIQNFCSGFAGTIISI), 360 to 380 (AISASFSSLSRIILASLGGIC), and 388 to 408 (VFFLCNTLFSMLFIPIFYTIY).

This sequence belongs to the major facilitator superfamily.

It is found in the cell inner membrane. In Rickettsia prowazekii (strain Madrid E), this protein is Putative transporter AmpG 3 (ampG3).